A 396-amino-acid chain; its full sequence is MIQLLALKRDLKVEIREKFSIIEKRIGDKDVLLKEVCNEVVILSTCNRIEIYFNSEKNRKQIIEEIFSKMGWNINFLENFFYCKGDEAINHLMEVACGFDSLILGEDQILGQIKAAYDTALKNKTSGSELKKLFQLVITCGKEFRSISMLNRIPVSSASIAVNKARQENLRRFMVFGFGDVGSLVCKYILSSDFDVLYIVVRNKAAVSIKDKRIKVLSFNEKNSYYDDVECMISCTSAPHPVIWEKELPYRKFTIFDLAVPRDVEETVYGRNNIDIYDIDQISMIDNNNRKKRKEIMMANRHIMSKYIVEFYDWQKVQEIVPDIIKLKLYGESVNKRRYETFKNKKATKDNDMLVNMLIKSTSNVYINRAIEVLKEEQLKGRGEDCLRILRRIFQK.

Substrate is bound by residues 45–48, Ser-101, 106–108, and Gln-112; these read TCNR and EDQ. Catalysis depends on Cys-46, which acts as the Nucleophile. Residue 177–182 participates in NADP(+) binding; sequence GFGDVG.

The protein belongs to the glutamyl-tRNA reductase family. In terms of assembly, homodimer.

The catalysed reaction is (S)-4-amino-5-oxopentanoate + tRNA(Glu) + NADP(+) = L-glutamyl-tRNA(Glu) + NADPH + H(+). It functions in the pathway porphyrin-containing compound metabolism; protoporphyrin-IX biosynthesis; 5-aminolevulinate from L-glutamyl-tRNA(Glu): step 1/2. Its function is as follows. Catalyzes the NADPH-dependent reduction of glutamyl-tRNA(Glu) to glutamate 1-semialdehyde (GSA). This is Glutamyl-tRNA reductase from Clostridium acetobutylicum (strain ATCC 824 / DSM 792 / JCM 1419 / IAM 19013 / LMG 5710 / NBRC 13948 / NRRL B-527 / VKM B-1787 / 2291 / W).